Consider the following 130-residue polypeptide: uncharacterized protein (130 aa).

The N-terminal stretch at Met-1–Ser-19 is a signal peptide.

It localises to the secreted. This is an uncharacterized protein from Homo sapiens (Human).